The following is a 350-amino-acid chain: tRNA uridine(34) hydroxylase (350 aa).

Residues 146–240 (DDPDAVFIDM…YARRAREQGL (95 aa)) enclose the Rhodanese domain. Cys-200 functions as the Cysteine persulfide intermediate in the catalytic mechanism. The segment covering 319–328 (RRRRAGRENG) has biased composition (basic and acidic residues). Positions 319 to 350 (RRRRAGRENGNKIFNKSRGRLNSKLSIPDPAE) are disordered.

This sequence belongs to the TrhO family.

It catalyses the reaction uridine(34) in tRNA + AH2 + O2 = 5-hydroxyuridine(34) in tRNA + A + H2O. In terms of biological role, catalyzes oxygen-dependent 5-hydroxyuridine (ho5U) modification at position 34 in tRNAs. The chain is tRNA uridine(34) hydroxylase from Salmonella choleraesuis (strain SC-B67).